Consider the following 172-residue polypeptide: Thioredoxin Y1, chloroplastic (172 aa).

The transit peptide at 1 to 62 (MASISLSSST…SSTTRCTPRR (62 aa)) directs the protein to the chloroplast. In terms of domain architecture, Thioredoxin spans 63–169 (IEAKKQTFDS…LIQRIEDSLK (107 aa)). Active-site nucleophile residues include Cys93 and Cys96. A disulfide bridge connects residues Cys93 and Cys96.

The protein belongs to the thioredoxin family. Plant Y-type subfamily. In terms of tissue distribution, expressed in roots and seeds.

The protein resides in the plastid. Its subcellular location is the chloroplast stroma. In terms of biological role, thiol-disulfide oxidoreductase that poorly activates chloroplastic malate dehydrogenase (NADP-MDH) and fructose-1,6-bisphosphatase. Provides reducing equivalents for peroxiredoxin Q. In Arabidopsis thaliana (Mouse-ear cress), this protein is Thioredoxin Y1, chloroplastic.